The sequence spans 516 residues: MHYSIIRKLVTAPKLANVPKRKWKSVVGLEVHAQIASASKLFSGSGTSFGAPLNSSVAYFDASIPGTLPVLNRKCVESGIKTSLALGCRVNEVSMFDRKHYFYADLPNGYQITQQRAALANDGKMTFPVITPGKKVYYKTAKLLQLQLEQDSGKSLHDDYLKRSLVDLNRAGLPLMELVFAPDLETGEEAASLVKELILILRRLQTCSCKMEEGALRVDANISIHQEGDPLGVRTEVKNIGSVRSISQAITYEINRQLETVANGGVITNETRNWDAENRRTVAMRDKEVLQDYRFMPEPNLPPLHVNLKPGSMSTEDLLSVAALSEEIPELPEDTRQRLVEQHNLNAETAIILVNEPILLDHFLSITRSLSDLPNKVICNFLINDLLTYCNKLNLDVEDCSIKADDLKDILMSLHAELINLQAARQLVDLLHNNPKAKVSELIELHSLQQICSPDEIENLCQLAIANQAKAVEQYQKGKAKALFAIAGEVAKLSSQKANMKLVVQRLEKLLKPTNK.

Belongs to the GatB/GatE family. GatB subfamily. In terms of assembly, subunit of the heterotrimeric GatCAB amidotransferase (AdT) complex, composed of A, B and C subunits.

Its subcellular location is the mitochondrion. The catalysed reaction is L-glutamyl-tRNA(Gln) + L-glutamine + ATP + H2O = L-glutaminyl-tRNA(Gln) + L-glutamate + ADP + phosphate + H(+). Functionally, allows the formation of correctly charged Gln-tRNA(Gln) through the transamidation of misacylated Glu-tRNA(Gln) in the mitochondria. The reaction takes place in the presence of glutamine and ATP through an activated gamma-phospho-Glu-tRNA(Gln). This Drosophila melanogaster (Fruit fly) protein is Glutamyl-tRNA(Gln) amidotransferase subunit B, mitochondrial.